The chain runs to 366 residues: Ribosomal RNA large subunit methyltransferase M (366 aa).

S-adenosyl-L-methionine is bound by residues S188, C221–G224, D240, D260, and D277. Residue K306 is the Proton acceptor of the active site.

The protein belongs to the class I-like SAM-binding methyltransferase superfamily. RNA methyltransferase RlmE family. RlmM subfamily. As to quaternary structure, monomer.

It localises to the cytoplasm. It catalyses the reaction cytidine(2498) in 23S rRNA + S-adenosyl-L-methionine = 2'-O-methylcytidine(2498) in 23S rRNA + S-adenosyl-L-homocysteine + H(+). Its function is as follows. Catalyzes the 2'-O-methylation at nucleotide C2498 in 23S rRNA. The protein is Ribosomal RNA large subunit methyltransferase M of Salmonella paratyphi C (strain RKS4594).